The primary structure comprises 233 residues: Large ribosomal subunit protein uL1 (233 aa).

The protein belongs to the universal ribosomal protein uL1 family. As to quaternary structure, part of the 50S ribosomal subunit.

Functionally, binds directly to 23S rRNA. The L1 stalk is quite mobile in the ribosome, and is involved in E site tRNA release. In terms of biological role, protein L1 is also a translational repressor protein, it controls the translation of the L11 operon by binding to its mRNA. The polypeptide is Large ribosomal subunit protein uL1 (Brucella suis (strain ATCC 23445 / NCTC 10510)).